The primary structure comprises 304 residues: Probable aspartoacylase (304 aa).

Positions 13 and 16 each coordinate Zn(2+). Substrate is bound by residues R55 and 62 to 63 (NR). H104 is a Zn(2+) binding site. 2 residues coordinate substrate: E162 and Y272.

This sequence belongs to the AspA/AstE family. Aspartoacylase subfamily. Zn(2+) serves as cofactor.

The catalysed reaction is an N-acyl-L-aspartate + H2O = a carboxylate + L-aspartate. The polypeptide is Probable aspartoacylase (Synechococcus sp. (strain CC9605)).